The following is a 381-amino-acid chain: Peptidoglycan glycosyltransferase MrdB (381 aa).

10 helical membrane passes run 11-31 (FDLL…LLIF), 40-60 (KQGV…FIPF), 66-86 (WLFA…FMGS), 102-122 (ITLQ…AHLI), 132-152 (YDWG…ALIL), 156-176 (DLGT…IVGL), 180-200 (VWLP…HFLH), 263-283 (FGFL…LHLF), 297-317 (IVAL…IAMT), and 328-348 (LPLF…FAIL).

The protein belongs to the SEDS family. MrdB/RodA subfamily.

The protein localises to the cell inner membrane. It carries out the reaction [GlcNAc-(1-&gt;4)-Mur2Ac(oyl-L-Ala-gamma-D-Glu-L-Lys-D-Ala-D-Ala)](n)-di-trans,octa-cis-undecaprenyl diphosphate + beta-D-GlcNAc-(1-&gt;4)-Mur2Ac(oyl-L-Ala-gamma-D-Glu-L-Lys-D-Ala-D-Ala)-di-trans,octa-cis-undecaprenyl diphosphate = [GlcNAc-(1-&gt;4)-Mur2Ac(oyl-L-Ala-gamma-D-Glu-L-Lys-D-Ala-D-Ala)](n+1)-di-trans,octa-cis-undecaprenyl diphosphate + di-trans,octa-cis-undecaprenyl diphosphate + H(+). It participates in cell wall biogenesis; peptidoglycan biosynthesis. Its function is as follows. Peptidoglycan polymerase that is essential for cell wall elongation. The polypeptide is Peptidoglycan glycosyltransferase MrdB (Helicobacter pylori (strain J99 / ATCC 700824) (Campylobacter pylori J99)).